The chain runs to 332 residues: RING finger protein 225 (332 aa).

Residues 1 to 55 (MPCPRLPWLRRHRTSQGSGPSSPSTVSAPNSPSRGEDEDAEEEEGDGTPGSGPIL) are disordered. Over residues 15–27 (SQGSGPSSPSTVS) the composition is skewed to low complexity. The span at 36 to 46 (EDEDAEEEEGD) shows a compositional bias: acidic residues. The RING-type zinc-finger motif lies at 63–111 (CLICVSPFDGIFKLPKRLDCGHVFCLECLARLSLATAGGGDAVACPMCR). The tract at residues 121–187 (GLPALPTQPG…PPPLRLGRPL (67 aa)) is disordered. A helical membrane pass occupies residues 205-225 (ALAVLVAAGLVVSGVYIFFLI). The interval 259–332 (THAWTRRPTK…ADGKKVQLQQ (74 aa)) is disordered. 2 stretches are compositionally biased toward basic and acidic residues: residues 280 to 295 (ATKDTPELEEATKDPV) and 323 to 332 (ADGKKVQLQQ).

The protein resides in the membrane. The chain is RING finger protein 225 from Mus musculus (Mouse).